A 351-amino-acid polypeptide reads, in one-letter code: 2-Hydroxyacid oxidase 2 (351 aa).

In terms of domain architecture, FMN hydroxy acid dehydrogenase spans 2-351 (SLVCLTDFQA…NRNLVQFSRL (350 aa)). Residues 77-79 (PTG), serine 106, and glutamine 128 contribute to the FMN site. Residue tyrosine 130 coordinates a 2-oxocarboxylate. Residue threonine 156 coordinates FMN. Arginine 165 contributes to the a 2-oxocarboxylate binding site. The residue at position 178 (threonine 178) is a Phosphothreonine. Position 222 (lysine 222) interacts with FMN. Histidine 246 acts as the Proton acceptor in catalysis. Residue arginine 249 participates in a 2-oxocarboxylate binding. Residues 277–281 (DGGVR) and 300–301 (GR) contribute to the FMN site. Positions 349–351 (SRL) match the Microbody targeting signal motif.

The protein belongs to the FMN-dependent alpha-hydroxy acid dehydrogenase family. Homotetramer. FMN serves as cofactor. Expressed in the liver and kidney.

It is found in the peroxisome. It catalyses the reaction a (2S)-2-hydroxycarboxylate + O2 = a 2-oxocarboxylate + H2O2. The enzyme catalyses 2-hydroxyhexadecanoate + O2 = 2-oxohexadecanoate + H2O2. The catalysed reaction is 2-hydroxyoctanoate + O2 = 2-oxooctanoate + H2O2. The protein operates within lipid metabolism; fatty acid metabolism. Its function is as follows. Oxidase that catalyzes the oxidation of medium and long chain hydroxyacids such as 2-hydroxyhexadecanoate and 2-hydroxyoctanoate, to the correspondong 2-oxoacids. Its role in the oxidation of 2-hydroxy fatty acids may contribute to the general pathway of fatty acid alpha-oxidation. Active in vitro with the artificial electron acceptor 2,6-dichlorophenolindophenol (DCIP), but O2 is believed to be the physiological electron acceptor, leading to the production of H2O2. Is not active on glycolate, glyoxylate, L-lactate and 2-hydroxybutanoate. The protein is 2-Hydroxyacid oxidase 2 (HAO2) of Homo sapiens (Human).